The primary structure comprises 143 residues: Antitumor antibiotic C-1027 apoprotein (143 aa).

An N-terminal signal peptide occupies residues 1-33; that stretch reads MSLRHMSRRASRFGVVAVASIGLAAAAQSVAFA. Intrachain disulfides connect Cys69-Cys78 and Cys119-Cys124.

It belongs to the neocarzinostatin family.

In terms of biological role, binds non-covalently to a chromophore which is the cytotoxic and mutagenic component of the antibiotic. The chromophore binds to DNA as a weak intercalator and causes single- and double-strand breaks. This Streptomyces globisporus protein is Antitumor antibiotic C-1027 apoprotein (cagA).